The primary structure comprises 419 residues: UDP-N-acetylglucosamine 1-carboxyvinyltransferase (419 aa).

22–23 (KN) is a binding site for phosphoenolpyruvate. R93 contributes to the UDP-N-acetyl-alpha-D-glucosamine binding site. The active-site Proton donor is the C117. 2-(S-cysteinyl)pyruvic acid O-phosphothioketal is present on C117. Residues D306 and I328 each contribute to the UDP-N-acetyl-alpha-D-glucosamine site.

The protein belongs to the EPSP synthase family. MurA subfamily.

It localises to the cytoplasm. It catalyses the reaction phosphoenolpyruvate + UDP-N-acetyl-alpha-D-glucosamine = UDP-N-acetyl-3-O-(1-carboxyvinyl)-alpha-D-glucosamine + phosphate. It participates in cell wall biogenesis; peptidoglycan biosynthesis. In terms of biological role, cell wall formation. Adds enolpyruvyl to UDP-N-acetylglucosamine. This Ruthia magnifica subsp. Calyptogena magnifica protein is UDP-N-acetylglucosamine 1-carboxyvinyltransferase.